The chain runs to 285 residues: Hydroxyacylglutathione hydrolase, mitochondrial (285 aa).

Residues 1-10 (MKFLLQQIRN) constitute a mitochondrion transit peptide. Positions 69, 71, 73, 74, 131, 154, and 198 each coordinate Zn(2+).

Zn(2+) is required as a cofactor.

It is found in the mitochondrion matrix. The enzyme catalyses an S-(2-hydroxyacyl)glutathione + H2O = a 2-hydroxy carboxylate + glutathione + H(+). It catalyses the reaction (R)-S-lactoylglutathione + H2O = (R)-lactate + glutathione + H(+). It participates in secondary metabolite metabolism; methylglyoxal degradation; (R)-lactate from methylglyoxal: step 2/2. Its activity is regulated as follows. Inhibited by various thiol compounds such as glutathione and coenzyme A. In terms of biological role, thiolesterase that catalyzes the hydrolysis of S-D-lactoylglutathione to form glutathione and D-lactic acid. Involved in the metabolism of methylglyoxal, a toxic compound for yeast proliferation, by converting methylglyoxal to lactate via S-D-lactoylglutathione by sequential enzyme reactions catalyzed by glyoxalase I and glyoxalase II. This chain is Hydroxyacylglutathione hydrolase, mitochondrial, found in Saccharomyces cerevisiae (strain ATCC 204508 / S288c) (Baker's yeast).